The primary structure comprises 218 residues: MSCSSALEKFINSYLNSYQNALSELPRYYPMGVASPCIAQTFDEQSEDAVFWQPVKREPAGDFDNVASALAITLHQDINHFYASFFSAPLQFNSPWGEGELLLAWSLEDFEYLQQNIIGHLLMKQKLKQAPTWFIGVLSDGDTMITVENDTGAVWIEVPGEVPKQQLAPSIAEFITQLSPRITPAIKPVQEVDPQWQHPGIWQRMKLMWRDLTHRSRK.

It belongs to the Syd family.

The protein resides in the cell inner membrane. Interacts with the SecY protein in vivo. May bind preferentially to an uncomplexed state of SecY, thus functioning either as a chelating agent for excess SecY in the cell or as a regulatory factor that negatively controls the translocase function. The chain is Protein Syd from Shewanella denitrificans (strain OS217 / ATCC BAA-1090 / DSM 15013).